The chain runs to 543 residues: Putative fatty acyl-CoA reductase CG8303 (543 aa).

The tract at residues 1–29 (MAVITEHGGTTSSPPENNNSIGNGKHRVN) is disordered. Residues 8–22 (GGTTSSPPENNNSIG) show a composition bias toward polar residues. 3 helical membrane-spanning segments follow: residues 386 to 406 (LFFY…EKLF), 500 to 520 (VFNV…YFAL), and 522 to 542 (LTLG…FLVW).

Belongs to the fatty acyl-CoA reductase family.

Its subcellular location is the membrane. It catalyses the reaction a long-chain fatty acyl-CoA + 2 NADPH + 2 H(+) = a long-chain primary fatty alcohol + 2 NADP(+) + CoA. The enzyme catalyses hexadecanoyl-CoA + 2 NADPH + 2 H(+) = hexadecan-1-ol + 2 NADP(+) + CoA. It carries out the reaction octadecanoyl-CoA + 2 NADPH + 2 H(+) = octadecan-1-ol + 2 NADP(+) + CoA. Catalyzes the reduction of C16 or C18 fatty acyl-CoA to fatty alcohols. The protein is Putative fatty acyl-CoA reductase CG8303 of Drosophila melanogaster (Fruit fly).